The following is a 314-amino-acid chain: Homoserine kinase (314 aa).

96–106 lines the ATP pocket; it reads PIGSGLGSSAC.

Belongs to the GHMP kinase family. Homoserine kinase subfamily.

It is found in the cytoplasm. The catalysed reaction is L-homoserine + ATP = O-phospho-L-homoserine + ADP + H(+). Its pathway is amino-acid biosynthesis; L-threonine biosynthesis; L-threonine from L-aspartate: step 4/5. In terms of biological role, catalyzes the ATP-dependent phosphorylation of L-homoserine to L-homoserine phosphate. In Haemophilus influenzae (strain PittEE), this protein is Homoserine kinase.